Here is a 257-residue protein sequence, read N- to C-terminus: Mediator of RNA polymerase II transcription subunit 7 (257 aa).

The interval 33 to 74 is disordered; sequence EWQRQQNDEEIETKQEEADDKDEKDNEKQNETQDTVPPGELR. Residues 44–63 show a composition bias toward basic and acidic residues; that stretch reads ETKQEEADDKDEKDNEKQNE.

This sequence belongs to the Mediator complex subunit 7 family. In terms of assembly, component of the Mediator complex.

The protein localises to the nucleus. In terms of biological role, component of the Mediator complex, a coactivator involved in the regulated transcription of nearly all RNA polymerase II-dependent genes. Mediator functions as a bridge to convey information from gene-specific regulatory proteins to the basal RNA polymerase II transcription machinery. Mediator is recruited to promoters by direct interactions with regulatory proteins and serves as a scaffold for the assembly of a functional preinitiation complex with RNA polymerase II and the general transcription factors. This is Mediator of RNA polymerase II transcription subunit 7 (MED7) from Scheffersomyces stipitis (strain ATCC 58785 / CBS 6054 / NBRC 10063 / NRRL Y-11545) (Yeast).